The primary structure comprises 78 residues: D-alanyl carrier protein (78 aa).

One can recognise a Carrier domain in the interval 1-78 (MEFREQVLDL…KIVEALEELK (78 aa)). Ser-36 is subject to O-(pantetheine 4'-phosphoryl)serine.

This sequence belongs to the DltC family. In terms of processing, 4'-phosphopantetheine is transferred from CoA to a specific serine of apo-DCP.

The protein resides in the cytoplasm. Its pathway is cell wall biogenesis; lipoteichoic acid biosynthesis. Functionally, carrier protein involved in the D-alanylation of lipoteichoic acid (LTA). The loading of thioester-linked D-alanine onto DltC is catalyzed by D-alanine--D-alanyl carrier protein ligase DltA. The DltC-carried D-alanyl group is further transferred to cell membrane phosphatidylglycerol (PG) by forming an ester bond, probably catalyzed by DltD. D-alanylation of LTA plays an important role in modulating the properties of the cell wall in Gram-positive bacteria, influencing the net charge of the cell wall. This Staphylococcus carnosus (strain TM300) protein is D-alanyl carrier protein.